Reading from the N-terminus, the 135-residue chain is Large ribosomal subunit protein uL16c (135 aa).

It belongs to the universal ribosomal protein uL16 family. In terms of assembly, part of the 50S ribosomal subunit.

The protein resides in the plastid. The protein localises to the chloroplast. The chain is Large ribosomal subunit protein uL16c from Populus alba (White poplar).